The following is an 82-amino-acid chain: UPF0213 protein SERP0126 (82 aa).

Residues D2 to K77 enclose the GIY-YIG domain.

It belongs to the UPF0213 family.

This chain is UPF0213 protein SERP0126, found in Staphylococcus epidermidis (strain ATCC 35984 / DSM 28319 / BCRC 17069 / CCUG 31568 / BM 3577 / RP62A).